We begin with the raw amino-acid sequence, 193 residues long: Apoptosis-associated speck-like protein containing a CARD (193 aa).

Residues 1–91 (MGRARDAILD…AEQLQTTKEE (91 aa)) enclose the Pyrin domain. Glycyl lysine isopeptide (Lys-Gly) (interchain with G-Cter in ubiquitin) cross-links involve residues lysine 55 and lysine 172. Residues 105–193 (STARTGHFVD…PYLVMDLEQS (89 aa)) enclose the CARD domain. Serine 193 is subject to Phosphoserine.

In terms of assembly, self-associates; enforced oligomerization induces apoptosis, NF-kappa-B regulation and interleukin-1 beta secretion. Homooligomers can form disk-like particles of approximately 12 nm diameter and approximately 1 nm height. Component of several inflammasomes containing one pattern recognition receptor/sensor, such as NLRP2, NLRP3, NLRP6, NLRC4, AIM2, MEFV or NOD2, and probably NLRC4 or NLRP12. Major component of the ASC pyroptosome, a 1-2 um supramolecular assembly (one per macrophage cell) which consists of oligomerized PYCARD dimers and CASP1. Interacts with CASP1 (precursor form); the interaction induces activation of CASP1 leading to the processing of interleukin-1 beta; PYCARD competes with RIPK2 for binding to CASP1. Interacts with NLRP3; the interaction requires the homooligomerization of NLRP3. Interacts with NLRP2, NLRC4, MEFV, CARD16, AIM2, NOD2, RIGI, RIPK2, PYDC1, PYDC2, NLRP10, CHUK, IKBKB and BAX. Interacts with CASP8. Component of the AIM2 PANoptosome complex, a multiprotein complex that drives inflammatory cell death (PANoptosis). Post-translationally, phosphorylated. In terms of processing, 'Lys-63'-linked polyubiquitination by TRAF3 is critical for speck formation and inflammasome activation. 'Lys-63'-linked deubiquitinated by USP50; a crucial step for NLRP3-mediated inflammasome activation. 'Lys-63'-linked polyubiquitination by PELI1 is also critical for speck formation and inflammasome activation. Deubiquitinated by USP3 that cleaves 'Lys-48'-linked ubiquitin chains and strengthens its stability by blocking proteasomal degradation. In terms of tissue distribution, expressed in small intestine, colon, thymus, spleen, brain, heart, skeletal muscle, kidney, lung and liver.

The protein localises to the cytoplasm. Its subcellular location is the inflammasome. It is found in the endoplasmic reticulum. It localises to the mitochondrion. The protein resides in the nucleus. Functions as a key mediator in apoptosis and inflammation. Promotes caspase-mediated apoptosis involving predominantly caspase-8 and also caspase-9 in a probable cell type-specific manner. Involved in activation of the mitochondrial apoptotic pathway, promotes caspase-8-dependent proteolytic maturation of BID independently of FADD in certain cell types and also mediates mitochondrial translocation of BAX and activates BAX-dependent apoptosis coupled to activation of caspase-9, -2 and -3. Involved in innate immune response by acting as an integral adapter in the assembly of various inflammasomes (NLRP2, NLRP3, NLRP6 and AIM2) which recruit and activate caspase-1 leading to processing and secretion of pro-inflammatory cytokines. Caspase-1-dependent inflammation leads to macrophage pyroptosis, a form of cell death. The function as activating adapter in different types of inflammasomes is mediated by the pyrin and CARD domains and their homotypic interactions. Clustered PYCARD nucleates the formation of caspase-1 filaments through the interaction of their respective CARD domains, acting as a platform for of caspase-1 polymerization. In the NLRC4 inflammasomes seems not be required but facilitates the processing of procaspase-1. In cooperation with NOD2 involved in an inflammasome activated by bacterial muramyl dipeptide leading to caspase-1 activation. May be involved in RIGI-triggered pro-inflammatory responses and inflammasome activation. In collaboration with AIM2 which detects cytosolic double-stranded DNA may also be involved in a caspase-1-independent cell death that involves caspase-8. In adaptive immunity may be involved in maturation of dendritic cells to stimulate T-cell immunity and in cytoskeletal rearrangements coupled to chemotaxis and antigen uptake may be involved in post-transcriptional regulation of the guanine nucleotide exchange factor DOCK2; the latter function is proposed to involve the nuclear form. Also involved in transcriptional activation of cytokines and chemokines independent of the inflammasome; this function may involve AP-1, NF-kappa-B, MAPK and caspase-8 signaling pathways. For regulation of NF-kappa-B activating and inhibiting functions have been reported. Modulates NF-kappa-B induction at the level of the IKK complex by inhibiting kinase activity of CHUK and IKBK. Proposed to compete with RIPK2 for association with CASP1 thereby down-regulating CASP1-mediated RIPK2-dependent NF-kappa-B activation and activating interleukin-1 beta processing. Modulates host resistance to DNA virus infection, probably by inducing the cleavage of and inactivating CGAS in presence of cytoplasmic double-stranded DNA. The protein is Apoptosis-associated speck-like protein containing a CARD (Pycard) of Mus musculus (Mouse).